Reading from the N-terminus, the 51-residue chain is MARYRCCLTHSRSRCRRRRRRRCRRRRRRFGRRRRRRVCCRRYTVVRCTRQ.

Cystine bridges form between cysteine 7–cysteine 15 and cysteine 40–cysteine 48.

This sequence belongs to the protamine P1 family. Cross-linked by interchain disulfide bonds around the DNA-helix. Testis.

Its subcellular location is the nucleus. The protein resides in the chromosome. Its function is as follows. Protamines substitute for histones in the chromatin of sperm during the haploid phase of spermatogenesis. They compact sperm DNA into a highly condensed, stable and inactive complex. The protein is Sperm protamine P1 (PRM1) of Capra hircus (Goat).